Reading from the N-terminus, the 399-residue chain is Homeobox protein ceh-39 (399 aa).

Disordered regions lie at residues 32–91 and 158–187; these read PEPA…GDTE and AKKS…RPAS. A compositionally biased stretch (low complexity) spans 60 to 79; it reads SSMCGSSSSSSSSSYSSGSS. The CUT DNA-binding region spans 205-291; that stretch reads NRQIGDDEEL…VRRALCFMKK (87 aa). Residues 315–374 constitute a DNA-binding region (homeobox); that stretch reads SDERIRRFTFTQTQLDSLHTVFQQQDRPNREMQQALSATLKLNRSTVGNFFMNARRRLPK.

This sequence belongs to the CUT homeobox family. In terms of tissue distribution, expressed in hermaphrodite gonads.

Its subcellular location is the nucleus. The protein localises to the chromosome. Transcriptional regulator which is involved in the sex determination and X chromosome dosage compensation pathways. Directly binds to 5'-ATTGAT-3' sites in the promoter of sex-determining factor xol-1 to negatively regulate its expression and promote hermaphrodite development. Associates with condensed DNA during mitosis. This is Homeobox protein ceh-39 from Caenorhabditis elegans.